The primary structure comprises 519 residues: Bifunctional purine biosynthesis protein PurH (519 aa).

Positions Met1–Val145 constitute an MGS-like domain.

It belongs to the PurH family.

It carries out the reaction (6R)-10-formyltetrahydrofolate + 5-amino-1-(5-phospho-beta-D-ribosyl)imidazole-4-carboxamide = 5-formamido-1-(5-phospho-D-ribosyl)imidazole-4-carboxamide + (6S)-5,6,7,8-tetrahydrofolate. It catalyses the reaction IMP + H2O = 5-formamido-1-(5-phospho-D-ribosyl)imidazole-4-carboxamide. Its pathway is purine metabolism; IMP biosynthesis via de novo pathway; 5-formamido-1-(5-phospho-D-ribosyl)imidazole-4-carboxamide from 5-amino-1-(5-phospho-D-ribosyl)imidazole-4-carboxamide (10-formyl THF route): step 1/1. The protein operates within purine metabolism; IMP biosynthesis via de novo pathway; IMP from 5-formamido-1-(5-phospho-D-ribosyl)imidazole-4-carboxamide: step 1/1. The protein is Bifunctional purine biosynthesis protein PurH of Allochromatium vinosum (strain ATCC 17899 / DSM 180 / NBRC 103801 / NCIMB 10441 / D) (Chromatium vinosum).